The sequence spans 98 residues: uncharacterized protein (98 aa).

This is an uncharacterized protein from Rickettsia conorii (strain ATCC VR-613 / Malish 7).